The primary structure comprises 133 residues: Helix-loop-helix protein 1 (133 aa).

The segment at 1–79 (MMLNSDTMEL…RRATAKYRTA (79 aa)) is disordered. Residues 25–45 (DCGGGAGPDGAGPGGPGGGQA) show a composition bias toward gly residues. Over residues 52–65 (EPGRKDLQHLSREE) the composition is skewed to basic and acidic residues. Over residues 66–79 (RRRRRRATAKYRTA) the composition is skewed to basic residues. One can recognise a bHLH domain in the interval 75–127 (KYRTAHATRERIRVEAFNLAFAELRKLLPTLPPDKKLSKIEILRLAICYISYL).

Efficient DNA binding requires dimerization with another bHLH protein.

The protein resides in the nucleus. May serve as DNA-binding protein and may be involved in the control of cell-type determination, possibly within the developing nervous system. The chain is Helix-loop-helix protein 1 (NHLH1) from Homo sapiens (Human).